We begin with the raw amino-acid sequence, 204 residues long: Tat proofreading chaperone DmsD (204 aa).

It belongs to the TorD/DmsD family. DmsD subfamily.

Its function is as follows. Required for biogenesis/assembly of DMSO reductase, but not for the interaction of the DmsA signal peptide with the Tat system. May be part of a chaperone cascade complex that facilitates a folding-maturation pathway for the substrate protein. The sequence is that of Tat proofreading chaperone DmsD from Salmonella typhi.